Reading from the N-terminus, the 200-residue chain is Large ribosomal subunit protein uL4 (200 aa).

The interval threonine 42–glycine 65 is disordered.

It belongs to the universal ribosomal protein uL4 family. Part of the 50S ribosomal subunit.

Its function is as follows. One of the primary rRNA binding proteins, this protein initially binds near the 5'-end of the 23S rRNA. It is important during the early stages of 50S assembly. It makes multiple contacts with different domains of the 23S rRNA in the assembled 50S subunit and ribosome. Forms part of the polypeptide exit tunnel. The chain is Large ribosomal subunit protein uL4 from Vibrio vulnificus (strain CMCP6).